A 57-amino-acid polypeptide reads, in one-letter code: Large ribosomal subunit protein bL32 (57 aa).

Over residues 1–16 the composition is skewed to basic residues; sequence MAVQKSRKTPSRRGMR. A disordered region spans residues 1 to 37; that stretch reads MAVQKSRKTPSRRGMRRSHDALSTTAITVDETTGELH. Over residues 21–31 the composition is skewed to polar residues; that stretch reads ALSTTAITVDE.

Belongs to the bacterial ribosomal protein bL32 family.

The chain is Large ribosomal subunit protein bL32 from Hydrogenovibrio crunogenus (strain DSM 25203 / XCL-2) (Thiomicrospira crunogena).